Consider the following 266-residue polypeptide: Putative carbamate hydrolase RutD (266 aa).

The 102-residue stretch at 14–115 (PVVVLISGLG…TVLISVNGWL (102 aa)) folds into the AB hydrolase-1 domain.

The protein belongs to the AB hydrolase superfamily. Hydrolase RutD family.

It catalyses the reaction carbamate + 2 H(+) = NH4(+) + CO2. Its function is as follows. Involved in pyrimidine catabolism. May facilitate the hydrolysis of carbamate, a reaction that can also occur spontaneously. The protein is Putative carbamate hydrolase RutD of Shigella sonnei (strain Ss046).